Here is an 88-residue protein sequence, read N- to C-terminus: Phosphocarrier protein HPr (88 aa).

In terms of domain architecture, HPr spans 1–88; it reads MAQKTFTVTA…DTMSKEGLGE (88 aa). Ser12 is subject to Phosphoserine. The active-site Pros-phosphohistidine intermediate is His15. A Phosphoserine; by HPrK/P modification is found at Ser46.

The protein belongs to the HPr family.

The protein localises to the cytoplasm. Its activity is regulated as follows. Phosphorylation on Ser-46 inhibits the phosphoryl transfer from enzyme I to HPr. Functionally, general (non sugar-specific) component of the phosphoenolpyruvate-dependent sugar phosphotransferase system (sugar PTS). This major carbohydrate active-transport system catalyzes the phosphorylation of incoming sugar substrates concomitantly with their translocation across the cell membrane. The phosphoryl group from phosphoenolpyruvate (PEP) is transferred to the phosphoryl carrier protein HPr by enzyme I. Phospho-HPr then transfers it to the PTS EIIA domain. P-Ser-HPr interacts with the catabolite control protein A (CcpA), forming a complex that binds to DNA at the catabolite response elements cre, operator sites preceding a large number of catabolite-regulated genes. Thus, P-Ser-HPr is a corepressor in carbon catabolite repression (CCR), a mechanism that allows bacteria to coordinate and optimize the utilization of available carbon sources. P-Ser-HPr also plays a role in inducer exclusion, in which it probably interacts with several non-PTS permeases and inhibits their transport activity. The protein is Phosphocarrier protein HPr (ptsH) of Priestia megaterium (Bacillus megaterium).